Consider the following 453-residue polypeptide: Glutamyl-tRNA(Gln) amidotransferase subunit A (453 aa).

Active-site charge relay system residues include Lys53 and Ser128. Ser152 functions as the Acyl-ester intermediate in the catalytic mechanism.

It belongs to the amidase family. GatA subfamily. As to quaternary structure, heterotrimer of A, B and C subunits.

The enzyme catalyses L-glutamyl-tRNA(Gln) + L-glutamine + ATP + H2O = L-glutaminyl-tRNA(Gln) + L-glutamate + ADP + phosphate + H(+). Allows the formation of correctly charged Gln-tRNA(Gln) through the transamidation of misacylated Glu-tRNA(Gln) in organisms which lack glutaminyl-tRNA synthetase. The reaction takes place in the presence of glutamine and ATP through an activated gamma-phospho-Glu-tRNA(Gln). This Helicobacter pylori (strain G27) protein is Glutamyl-tRNA(Gln) amidotransferase subunit A.